The following is a 460-amino-acid chain: Phosphoenolpyruvate carboxylase (460 aa).

The protein belongs to the PEPCase type 2 family. As to quaternary structure, homotetramer. It depends on Mg(2+) as a cofactor.

It carries out the reaction oxaloacetate + phosphate = phosphoenolpyruvate + hydrogencarbonate. Functionally, catalyzes the irreversible beta-carboxylation of phosphoenolpyruvate (PEP) to form oxaloacetate (OAA), a four-carbon dicarboxylic acid source for the tricarboxylic acid cycle. In Pyrobaculum aerophilum (strain ATCC 51768 / DSM 7523 / JCM 9630 / CIP 104966 / NBRC 100827 / IM2), this protein is Phosphoenolpyruvate carboxylase.